We begin with the raw amino-acid sequence, 66 residues long: Large ribosomal subunit protein uL29 (66 aa).

It belongs to the universal ribosomal protein uL29 family.

The protein is Large ribosomal subunit protein uL29 of Helicobacter pylori (strain HPAG1).